The primary structure comprises 428 residues: Glutamate-1-semialdehyde 2,1-aminomutase (428 aa).

An N6-(pyridoxal phosphate)lysine modification is found at lysine 267.

It belongs to the class-III pyridoxal-phosphate-dependent aminotransferase family. HemL subfamily. Homodimer. Pyridoxal 5'-phosphate serves as cofactor.

The protein localises to the cytoplasm. It catalyses the reaction (S)-4-amino-5-oxopentanoate = 5-aminolevulinate. Its pathway is porphyrin-containing compound metabolism; protoporphyrin-IX biosynthesis; 5-aminolevulinate from L-glutamyl-tRNA(Glu): step 2/2. This Flavobacterium psychrophilum (strain ATCC 49511 / DSM 21280 / CIP 103535 / JIP02/86) protein is Glutamate-1-semialdehyde 2,1-aminomutase.